The primary structure comprises 749 residues: DNA topoisomerase 1 (749 aa).

The tract at residues 1-110 (MSDSEDVALS…PKKEDSVETD (110 aa)) is disordered. The segment covering 62-75 (LSKEKVNNKVKDEL) has biased composition (basic and acidic residues). Positions 79-94 (PVTPKKTPKISKTPVS) are enriched in low complexity. Residues 101-110 (PKKEDSVETD) show a composition bias toward basic and acidic residues. Interaction with DNA regions lie at residues 338 to 339 (KY), 401 to 406 (RAGGEK), and 493 to 495 (TAK). A Topo IB-type catalytic domain is found at 345-749 (NSSIKGISDM…IESTDENWRF (405 aa)). The O-(3'-phospho-DNA)-tyrosine intermediate role is filled by Y707.

It belongs to the type IB topoisomerase family.

Its subcellular location is the nucleus. The protein localises to the nucleolus. The protein resides in the nucleoplasm. It carries out the reaction ATP-independent breakage of single-stranded DNA, followed by passage and rejoining.. Releases the supercoiling and torsional tension of DNA introduced during the DNA replication and transcription by transiently cleaving and rejoining one strand of the DNA duplex. Introduces a single-strand break via transesterification at the specific target site 5'-[CT]CCTTp site in duplex DNA. The scissile phosphodiester is attacked by the catalytic tyrosine of the enzyme, resulting in the formation of a DNA-(3'-phosphotyrosyl)-enzyme intermediate and the expulsion of a 5'-OH DNA strand. The free DNA strand then undergoes passage around the unbroken strand thus removing DNA supercoils. Finally, in the religation step, the DNA 5'-OH attacks the covalent intermediate to expel the active-site tyrosine and restore the DNA phosphodiester backbone. This chain is DNA topoisomerase 1 (TOP1), found in Candidozyma auris (Yeast).